Consider the following 277-residue polypeptide: MDNAVDRHVFYISDGTAITAEVLGHAVMSQFPVTISSITLPFVENESRARAVKDQIDAIYHQTGVRPLVFYSIVLPEIRAIILQSEGFCQDIVQALVAPLQQEMKLDPTPIAHRTHGLNPNNLNKYDARIAAIDYTLAHDDGISLRNLDQAQVILLGVSRCGKTPTSLYLAMQFGIRTANYPFIADDMDNLVLPASLKPLQHKLFGLTIDPERLAAIREERRENSRYASLRQCRMEVAEVEALYRKNQIPWINSTNYSVEEIATKILDIMGLSRRMY.

157-164 (GVSRCGKT) is an ADP binding site.

It belongs to the pyruvate, phosphate/water dikinase regulatory protein family. PSRP subfamily.

It catalyses the reaction [pyruvate, water dikinase] + ADP = [pyruvate, water dikinase]-phosphate + AMP + H(+). The catalysed reaction is [pyruvate, water dikinase]-phosphate + phosphate + H(+) = [pyruvate, water dikinase] + diphosphate. In terms of biological role, bifunctional serine/threonine kinase and phosphorylase involved in the regulation of the phosphoenolpyruvate synthase (PEPS) by catalyzing its phosphorylation/dephosphorylation. In Shigella boydii serotype 4 (strain Sb227), this protein is Phosphoenolpyruvate synthase regulatory protein.